The chain runs to 565 residues: MKANLLVLLCALAAADADTICIGYHANNSTDTVDTVLEKNVTVTHSVNLLEDSHNGKLCRLKGIAPLQLGKCNIAGWLLGNPECDPLLPVRSWSYIVETPNSENGICYPGDFIDYEELREQLSSVSSFERFEIFPKESSWPNHNTNGVTAACSHEGKSSFYRNLLWLTEKEGSYPKLKNSYVNKKGKEVLVLWGIHHPPNSKEQQNLYQNENAYVSVVTSNYNRRFTPEIAERPKVRDQAGRMNYYWTLLKPGDTIIFEANGNLIAPMYAFALSRGFGSGIITSNASMHECNTKCQTPLGAINSSLPYQNIHPVTIGECPKYVRSAKLRMVTGLRNIPSIQSRGLFGAIAGFIEGGWTGMIDGWYGYHHQNEQGSGYAADQKSTQNAINGITNKVNTVIEKMNIQFTAVGKEFNKLEKRMENLNKKVDDGFLDIWTYNAELLVLLENERTLDFHDSNVKNLYEKVKSQLKNNAKEIGNGCFEFYHKCDNECMESVRNGTYDYPKYSEESKLNREKVDGVKLESMGIYQILAIYSTVASSLVLLVSLGAISFWMCSNGSLQCRICI.

Positions 1–17 (MKANLLVLLCALAAADA) are cleaved as a signal peptide. The Extracellular portion of the chain corresponds to 18 to 528 (DTICIGYHAN…VKLESMGIYQ (511 aa)). 6 disulfides stabilise this stretch: Cys21-Cys480, Cys59-Cys291, Cys72-Cys84, Cys107-Cys152, Cys295-Cys319, and Cys487-Cys491. N-linked (GlcNAc...) asparagine; by host glycans are attached at residues Asn27, Asn28, and Asn40. N-linked (GlcNAc...) asparagine; by host glycans are attached at residues Asn285 and Asn303. A glycan (N-linked (GlcNAc...) asparagine; by host) is linked at Asn497. Residues 529–549 (ILAIYSTVASSLVLLVSLGAI) traverse the membrane as a helical segment. Residues 550–565 (SFWMCSNGSLQCRICI) are Cytoplasmic-facing. S-palmitoyl cysteine; by host attachment occurs at residues Cys554, Cys561, and Cys564.

It belongs to the influenza viruses hemagglutinin family. As to quaternary structure, homotrimer of disulfide-linked HA1-HA2. Interacts with human CACNA1C. Palmitoylated. Post-translationally, in natural infection, inactive HA is matured into HA1 and HA2 outside the cell by one or more trypsin-like, arginine-specific endoprotease secreted by the bronchial epithelial cells. One identified protease that may be involved in this process is secreted in lungs by club cells.

The protein resides in the virion membrane. The protein localises to the host apical cell membrane. Binds to sialic acid-containing receptors on the cell surface, bringing about the attachment of the virus particle to the cell. This attachment induces virion internalization either through clathrin-dependent endocytosis or through clathrin- and caveolin-independent pathway. Plays a major role in the determination of host range restriction and virulence. Class I viral fusion protein. Responsible for penetration of the virus into the cell cytoplasm by mediating the fusion of the membrane of the endocytosed virus particle with the endosomal membrane. Low pH in endosomes induces an irreversible conformational change in HA2, releasing the fusion hydrophobic peptide. Several trimers are required to form a competent fusion pore. The sequence is that of Hemagglutinin from Aves (Human).